Here is a 92-residue protein sequence, read N- to C-terminus: Large ribosomal subunit protein eL43 (92 aa).

Residues Cys39, Cys42, Cys57, and Cys60 each contribute to the Zn(2+) site. The C4-type zinc-finger motif lies at Cys39–Cys60.

Belongs to the eukaryotic ribosomal protein eL43 family. As to quaternary structure, component of the large ribosomal subunit.

The protein localises to the cytoplasm. Component of the large ribosomal subunit. The ribosome is a large ribonucleoprotein complex responsible for the synthesis of proteins in the cell. This Mus musculus (Mouse) protein is Large ribosomal subunit protein eL43 (Rpl37a).